The primary structure comprises 146 residues: Ribonuclease H (146 aa).

The 143-residue stretch at 1–143 (MEKKVTIYTD…CDELARLAVR (143 aa)) folds into the RNase H type-1 domain. Mg(2+) is bound by residues Asp10, Glu48, Asp70, and Asp135.

Belongs to the RNase H family. As to quaternary structure, monomer. Requires Mg(2+) as cofactor.

It is found in the cytoplasm. The catalysed reaction is Endonucleolytic cleavage to 5'-phosphomonoester.. Its function is as follows. Endonuclease that specifically degrades the RNA of RNA-DNA hybrids. The polypeptide is Ribonuclease H (Chlorobium phaeovibrioides (strain DSM 265 / 1930) (Prosthecochloris vibrioformis (strain DSM 265))).